Reading from the N-terminus, the 715-residue chain is uncharacterized protein (715 aa).

Disordered regions lie at residues 192–216 (ASSV…SVTA), 300–348 (NEEV…TSKR), 461–481 (ASSS…RSNE), and 580–630 (FTVS…KPPK). Residues 202–213 (NNTSPYPPSNSS) are compositionally biased toward low complexity. 2 stretches are compositionally biased toward polar residues: residues 301-326 (EEVS…NKND) and 472-481 (HLGTSLRSNE). A compositionally biased stretch (low complexity) spans 601 to 614 (TDSSPSDTISSSPT).

This is an uncharacterized protein from Schizosaccharomyces pombe (strain 972 / ATCC 24843) (Fission yeast).